A 334-amino-acid chain; its full sequence is GTPase Obg (334 aa).

One can recognise an Obg domain in the interval 1-159 (MRFVDEVVIK…KEVRLELNLL (159 aa)). One can recognise an OBG-type G domain in the interval 160–331 (ADVALLGLPN…LAKKLNEFLQ (172 aa)). GTP contacts are provided by residues 166 to 173 (GLPNAGKS), 191 to 195 (FTTMY), 212 to 215 (DIPG), 282 to 285 (NKID), and 312 to 314 (SAA). Mg(2+)-binding residues include serine 173 and threonine 193.

This sequence belongs to the TRAFAC class OBG-HflX-like GTPase superfamily. OBG GTPase family. As to quaternary structure, monomer. Requires Mg(2+) as cofactor.

The protein resides in the cytoplasm. In terms of biological role, an essential GTPase which binds GTP, GDP and possibly (p)ppGpp with moderate affinity, with high nucleotide exchange rates and a fairly low GTP hydrolysis rate. Plays a role in control of the cell cycle, stress response, ribosome biogenesis and in those bacteria that undergo differentiation, in morphogenesis control. This Francisella tularensis subsp. holarctica (strain FTNF002-00 / FTA) protein is GTPase Obg.